Consider the following 507-residue polypeptide: UDP-N-acetylmuramoyl-L-alanyl-D-glutamate--2,6-diaminopimelate ligase (507 aa).

Ser-32 serves as a coordination point for UDP-N-acetyl-alpha-D-muramoyl-L-alanyl-D-glutamate. ATP is bound at residue 117 to 123; it reads GTNGKTT. UDP-N-acetyl-alpha-D-muramoyl-L-alanyl-D-glutamate is bound by residues 159-160, Ser-186, Gln-192, and Arg-194; that span reads TT. Lys-226 carries the post-translational modification N6-carboxylysine. Meso-2,6-diaminopimelate contacts are provided by residues Arg-400, 424-427, Gly-475, and Glu-479; that span reads DNPR. A Meso-diaminopimelate recognition motif motif is present at residues 424–427; it reads DNPR.

This sequence belongs to the MurCDEF family. MurE subfamily. Mg(2+) serves as cofactor. In terms of processing, carboxylation is probably crucial for Mg(2+) binding and, consequently, for the gamma-phosphate positioning of ATP.

It localises to the cytoplasm. The catalysed reaction is UDP-N-acetyl-alpha-D-muramoyl-L-alanyl-D-glutamate + meso-2,6-diaminopimelate + ATP = UDP-N-acetyl-alpha-D-muramoyl-L-alanyl-gamma-D-glutamyl-meso-2,6-diaminopimelate + ADP + phosphate + H(+). It participates in cell wall biogenesis; peptidoglycan biosynthesis. In terms of biological role, catalyzes the addition of meso-diaminopimelic acid to the nucleotide precursor UDP-N-acetylmuramoyl-L-alanyl-D-glutamate (UMAG) in the biosynthesis of bacterial cell-wall peptidoglycan. This chain is UDP-N-acetylmuramoyl-L-alanyl-D-glutamate--2,6-diaminopimelate ligase, found in Prochlorococcus marinus (strain MIT 9313).